A 214-amino-acid chain; its full sequence is Probable transaldolase (214 aa).

Lys83 functions as the Schiff-base intermediate with substrate in the catalytic mechanism.

The protein belongs to the transaldolase family. Type 3B subfamily.

The protein resides in the cytoplasm. It catalyses the reaction D-sedoheptulose 7-phosphate + D-glyceraldehyde 3-phosphate = D-erythrose 4-phosphate + beta-D-fructose 6-phosphate. It participates in carbohydrate degradation; pentose phosphate pathway; D-glyceraldehyde 3-phosphate and beta-D-fructose 6-phosphate from D-ribose 5-phosphate and D-xylulose 5-phosphate (non-oxidative stage): step 2/3. Its function is as follows. Transaldolase is important for the balance of metabolites in the pentose-phosphate pathway. The sequence is that of Probable transaldolase from Geobacter sulfurreducens (strain ATCC 51573 / DSM 12127 / PCA).